Consider the following 1302-residue polypeptide: Zinc finger protein 536 (1302 aa).

Residues 1–26 (MEEASLCLGVSSTAPEAEPHLSGPVL) are disordered. 7 C2H2-type zinc fingers span residues 130–152 (YPCPLCGKRFRFNSILSLHMRTH), 158–180 (FKCPYCDHRAAQKGNLKIHLRTH), 274–297 (FRCTFCKGKFKKREELDRHIRILH), 300–323 (YKCTLCDFAASQEEELISHVEKAH), 345–367 (FRCEVCGQVFSQAWFLKGHMRKH), 373–395 (HCCQICGRRFKEPWFLKNHMKVH), and 631–653 (TECPDCGRVFRTYHQVVVHSRVH). Residues 650–736 (SRVHKRDRKS…IGEEAGRAGG (87 aa)) form a disordered region. Basic and acidic residues predominate over residues 657–676 (RKSDEDALHVGVGLEERRGS). Polar residues predominate over residues 677–698 (GSDQESQSVSRSTTPGSSNVTE). C2H2-type zinc fingers lie at residues 753 to 775 (KDCPYCGKTFRTSHHLKVHLRIH) and 781 to 803 (YKCPHCDYAGTQSASLKYHLERH). Disordered regions lie at residues 804 to 832 (HRERQNGAGPLSGQPPNQEHKDETSSKAP), 855 to 897 (GPAS…SKSS), 935 to 988 (KDTK…APTL), and 1133 to 1261 (NKNT…GLEK). A phosphoserine mark is found at Ser-828 and Ser-829. Residues 869–883 (GDHSGQATGMPSELS) are compositionally biased toward polar residues. A compositionally biased stretch (basic and acidic residues) spans 935–973 (KDTKDKVPSDAHPMKAHTAEGGEEKASMKPSQRKSEKSQ). 2 stretches are compositionally biased toward acidic residues: residues 1161–1171 (DLSDIASSEDM) and 1179–1188 (NEDEELDTEP). Over residues 1198 to 1212 (LSKDGSSEGGDSLLS) the composition is skewed to low complexity.

The protein belongs to the krueppel C2H2-type zinc-finger protein family. Expressed predominantly in the brain, while a weak signal is also detected in the heart and testis. Expression is abundant in neuronal cells of the cerebral cortex, hippocampus and hypothalamic area (at protein level).

Its subcellular location is the nucleus. Functionally, transcriptional repressor that negatively regulates neuron differentiation by repressing retinoic acid-induced gene transcription. Binds and interrupts RARA from binding to retinoic acid response elements (RARE) composed of tandem 5'-AGGTCA-3' sites known as DR1-DR5. Recognizes and binds 2 copies of the core DNA sequence 5'-CCCCCA-3'. The chain is Zinc finger protein 536 (Znf536) from Mus musculus (Mouse).